The following is a 489-amino-acid chain: 3-octaprenyl-4-hydroxybenzoate carboxy-lyase (489 aa).

Asparagine 172 serves as a coordination point for Mn(2+). Prenylated FMN-binding positions include 175–177 (IYR), 189–191 (RWL), and 194–195 (RG). Position 238 (glutamate 238) interacts with Mn(2+). The active-site Proton donor is the aspartate 287.

It belongs to the UbiD family. In terms of assembly, homohexamer. Requires prenylated FMN as cofactor. Mn(2+) serves as cofactor.

Its subcellular location is the cell membrane. It catalyses the reaction a 4-hydroxy-3-(all-trans-polyprenyl)benzoate + H(+) = a 2-(all-trans-polyprenyl)phenol + CO2. It functions in the pathway cofactor biosynthesis; ubiquinone biosynthesis. In terms of biological role, catalyzes the decarboxylation of 3-octaprenyl-4-hydroxy benzoate to 2-octaprenylphenol, an intermediate step in ubiquinone biosynthesis. In Salmonella paratyphi B (strain ATCC BAA-1250 / SPB7), this protein is 3-octaprenyl-4-hydroxybenzoate carboxy-lyase.